We begin with the raw amino-acid sequence, 463 residues long: Bifunctional protein HldE (463 aa).

A ribokinase region spans residues 1 to 311 (MKQILVVGDL…EEIALILNQT (311 aa)). An ATP-binding site is contributed by 191-194 (NRIE). The active site involves aspartate 260. The cytidylyltransferase stretch occupies residues 334–463 (FTNGCFDILH…IERIKRTCND (130 aa)).

The protein in the N-terminal section; belongs to the carbohydrate kinase PfkB family. In the C-terminal section; belongs to the cytidylyltransferase family. Homodimer.

The catalysed reaction is D-glycero-beta-D-manno-heptose 7-phosphate + ATP = D-glycero-beta-D-manno-heptose 1,7-bisphosphate + ADP + H(+). The enzyme catalyses D-glycero-beta-D-manno-heptose 1-phosphate + ATP + H(+) = ADP-D-glycero-beta-D-manno-heptose + diphosphate. It participates in nucleotide-sugar biosynthesis; ADP-L-glycero-beta-D-manno-heptose biosynthesis; ADP-L-glycero-beta-D-manno-heptose from D-glycero-beta-D-manno-heptose 7-phosphate: step 1/4. Its pathway is nucleotide-sugar biosynthesis; ADP-L-glycero-beta-D-manno-heptose biosynthesis; ADP-L-glycero-beta-D-manno-heptose from D-glycero-beta-D-manno-heptose 7-phosphate: step 3/4. Functionally, catalyzes the phosphorylation of D-glycero-D-manno-heptose 7-phosphate at the C-1 position to selectively form D-glycero-beta-D-manno-heptose-1,7-bisphosphate. In terms of biological role, catalyzes the ADP transfer from ATP to D-glycero-beta-D-manno-heptose 1-phosphate, yielding ADP-D-glycero-beta-D-manno-heptose. The protein is Bifunctional protein HldE of Helicobacter pylori (strain Shi470).